We begin with the raw amino-acid sequence, 276 residues long: Large ribosomal subunit protein uL2 (276 aa).

The tract at residues 225–276 (MNPNDHPHGGGEGRNPIGRNPVTPWGKPALGAKTRKKKHPSNRFIVKRRGKK) is disordered. Over residues 257 to 276 (KTRKKKHPSNRFIVKRRGKK) the composition is skewed to basic residues.

It belongs to the universal ribosomal protein uL2 family. Part of the 50S ribosomal subunit. Forms a bridge to the 30S subunit in the 70S ribosome.

One of the primary rRNA binding proteins. Required for association of the 30S and 50S subunits to form the 70S ribosome, for tRNA binding and peptide bond formation. It has been suggested to have peptidyltransferase activity; this is somewhat controversial. Makes several contacts with the 16S rRNA in the 70S ribosome. In Desulfitobacterium hafniense (strain Y51), this protein is Large ribosomal subunit protein uL2.